A 355-amino-acid polypeptide reads, in one-letter code: Hyaluronan and proteoglycan link protein 1 (355 aa).

Positions 1 to 9 are excised as a propeptide; that stretch reads MTSLLFLVL. N-linked (GlcNAc...) asparagine glycans are attached at residues Asn-21 and Asn-56. Residues 38–156 enclose the Ig-like V-type domain; it reads PRLLVVAEQA…EDDTAVVALN (119 aa). 5 disulfides stabilise this stretch: Cys-61–Cys-140, Cys-182–Cys-253, Cys-206–Cys-227, Cys-280–Cys-350, and Cys-305–Cys-326. Link domains lie at 160–255 and 260–352; these read VVFP…FCFT and GRFY…YCFR.

This sequence belongs to the HAPLN family.

The protein localises to the secreted. It localises to the extracellular space. The protein resides in the extracellular matrix. In terms of biological role, stabilizes the aggregates of proteoglycan monomers with hyaluronic acid in the extracellular cartilage matrix. This chain is Hyaluronan and proteoglycan link protein 1 (HAPLN1), found in Gallus gallus (Chicken).